The sequence spans 325 residues: Casein kinase I isoform alpha (325 aa).

An N-acetylalanine modification is found at Ala-2. Ser-4 carries the phosphoserine modification. Lys-8 is modified (N6-acetyllysine). The 269-residue stretch at 17 to 285 (YKLVRKIGSG…YLRQLFRILF (269 aa)) folds into the Protein kinase domain. Residues 23 to 31 (IGSGSFGDI) and Lys-46 contribute to the ATP site. The active-site Proton acceptor is Asp-136. The residue at position 156 (Ile-156) is a Phosphoserine.

It belongs to the protein kinase superfamily. CK1 Ser/Thr protein kinase family. Casein kinase I subfamily. In terms of assembly, interacts with the Axin complex. Interacts with TUT1, leading to TUT1 phosphorylation. Interacts with FAM83A, FAM83B, FAM83C, FAM83D, FAM83E, FAM83F, FAM83G and FAM83H (via DUF1669). Interaction with FAM83H recruits CSNK1A1 to keratin filaments. Phosphorylated by MTOR in response to mitogenic stimulation, leading to its activation.

The protein localises to the cytoplasm. It is found in the cytoskeleton. The protein resides in the microtubule organizing center. It localises to the centrosome. Its subcellular location is the chromosome. The protein localises to the centromere. It is found in the kinetochore. The protein resides in the nucleus speckle. It localises to the cilium basal body. Its subcellular location is the spindle. It catalyses the reaction L-seryl-[protein] + ATP = O-phospho-L-seryl-[protein] + ADP + H(+). The enzyme catalyses L-threonyl-[protein] + ATP = O-phospho-L-threonyl-[protein] + ADP + H(+). In terms of biological role, casein kinases are operationally defined by their preferential utilization of acidic proteins such as caseins as substrates. Can phosphorylate a large number of proteins. Participates in Wnt signaling. Phosphorylates CTNNB1 at 'Ser-45'. May phosphorylate PER1 and PER2. May play a role in segregating chromosomes during mitosis. May play a role in keratin cytoskeleton disassembly and thereby, it may regulate epithelial cell migration. Acts as a positive regulator of mTORC1 and mTORC2 signaling in response to nutrients by mediating phosphorylation of DEPTOR inhibitor. Acts as an inhibitor of NLRP3 inflammasome assembly by mediating phosphorylation of NLRP3. This chain is Casein kinase I isoform alpha (Csnk1a1), found in Rattus norvegicus (Rat).